A 503-amino-acid chain; its full sequence is Phenylalanine--tRNA ligase alpha subunit (503 aa).

At S2 the chain carries N-acetylserine. The tract at residues 2–173 (SDFQLEILKK…KRKLIAQGKI (172 aa)) is contains the major tRNA-Phe binding sites. L-phenylalanine-binding positions include T333, 374–376 (QVE), and Y414. E416 is a binding site for Mg(2+). F440 lines the L-phenylalanine pocket.

This sequence belongs to the class-II aminoacyl-tRNA synthetase family. Phe-tRNA synthetase alpha subunit type 2 subfamily. As to quaternary structure, tetramer of two alpha and two beta subunits. It depends on Mg(2+) as a cofactor.

Its subcellular location is the cytoplasm. It carries out the reaction tRNA(Phe) + L-phenylalanine + ATP = L-phenylalanyl-tRNA(Phe) + AMP + diphosphate + H(+). This is Phenylalanine--tRNA ligase alpha subunit (FRS2) from Saccharomyces cerevisiae (strain ATCC 204508 / S288c) (Baker's yeast).